The sequence spans 226 residues: Ribose-5-phosphate isomerase A (226 aa).

Substrate is bound by residues Thr-33–Thr-36, Asp-86–Asp-89, and Lys-99–Gly-102. Glu-108 functions as the Proton acceptor in the catalytic mechanism. Lys-126 is a substrate binding site.

Belongs to the ribose 5-phosphate isomerase family. Homodimer.

The enzyme catalyses aldehydo-D-ribose 5-phosphate = D-ribulose 5-phosphate. It participates in carbohydrate degradation; pentose phosphate pathway; D-ribose 5-phosphate from D-ribulose 5-phosphate (non-oxidative stage): step 1/1. Functionally, catalyzes the reversible conversion of ribose-5-phosphate to ribulose 5-phosphate. This is Ribose-5-phosphate isomerase A from Bordetella parapertussis (strain 12822 / ATCC BAA-587 / NCTC 13253).